The following is a 95-amino-acid chain: Ferredoxin-like protein FixX (95 aa).

Belongs to the bacterial-type ferredoxin family. FixX subfamily.

Functionally, could be part of an electron transfer system required for anaerobic carnitine reduction. Could be a 3Fe-4S cluster-containing protein. This chain is Ferredoxin-like protein FixX (fixX), found in Escherichia coli O157:H7.